Consider the following 273-residue polypeptide: Ribosomal RNA small subunit methyltransferase A (273 aa).

S-adenosyl-L-methionine contacts are provided by Asn18, Leu20, Gly45, Glu66, Asp91, and Asn113.

Belongs to the class I-like SAM-binding methyltransferase superfamily. rRNA adenine N(6)-methyltransferase family. RsmA subfamily.

Its subcellular location is the cytoplasm. It catalyses the reaction adenosine(1518)/adenosine(1519) in 16S rRNA + 4 S-adenosyl-L-methionine = N(6)-dimethyladenosine(1518)/N(6)-dimethyladenosine(1519) in 16S rRNA + 4 S-adenosyl-L-homocysteine + 4 H(+). Functionally, specifically dimethylates two adjacent adenosines (A1518 and A1519) in the loop of a conserved hairpin near the 3'-end of 16S rRNA in the 30S particle. May play a critical role in biogenesis of 30S subunits. This chain is Ribosomal RNA small subunit methyltransferase A, found in Escherichia coli O81 (strain ED1a).